We begin with the raw amino-acid sequence, 138 residues long: Putative pre-16S rRNA nuclease (138 aa).

It belongs to the YqgF nuclease family.

The protein resides in the cytoplasm. Functionally, could be a nuclease involved in processing of the 5'-end of pre-16S rRNA. This Citrobacter koseri (strain ATCC BAA-895 / CDC 4225-83 / SGSC4696) protein is Putative pre-16S rRNA nuclease.